Reading from the N-terminus, the 190-residue chain is UPF0200 protein TSIB_0920 (190 aa).

Glycine 7–glycine 14 provides a ligand contact to ATP.

It belongs to the UPF0200 family.

This chain is UPF0200 protein TSIB_0920, found in Thermococcus sibiricus (strain DSM 12597 / MM 739).